The chain runs to 252 residues: Probable truncated L-gulonolactone oxidase 7, mitochondrial (252 aa).

Residues 1–102 (MKRSMRSHLA…ELNYGVLVRY (102 aa)) constitute a mitochondrion transit peptide.

Belongs to the oxygen-dependent FAD-linked oxidoreductase family.

It localises to the mitochondrion. The enzyme catalyses L-gulono-1,4-lactone + O2 = L-ascorbate + H2O2 + H(+). It participates in cofactor biosynthesis; L-ascorbate biosynthesis. In terms of biological role, may be involved in the biosynthesis of ascorbic acid. The polypeptide is Probable truncated L-gulonolactone oxidase 7, mitochondrial (Arabidopsis thaliana (Mouse-ear cress)).